We begin with the raw amino-acid sequence, 325 residues long: Tetraacyldisaccharide 4'-kinase (325 aa).

Threonine 55 to threonine 62 is a binding site for ATP.

This sequence belongs to the LpxK family.

The enzyme catalyses a lipid A disaccharide + ATP = a lipid IVA + ADP + H(+). It functions in the pathway glycolipid biosynthesis; lipid IV(A) biosynthesis; lipid IV(A) from (3R)-3-hydroxytetradecanoyl-[acyl-carrier-protein] and UDP-N-acetyl-alpha-D-glucosamine: step 6/6. Transfers the gamma-phosphate of ATP to the 4'-position of a tetraacyldisaccharide 1-phosphate intermediate (termed DS-1-P) to form tetraacyldisaccharide 1,4'-bis-phosphate (lipid IVA). The chain is Tetraacyldisaccharide 4'-kinase from Salmonella typhi.